Consider the following 1249-residue polypeptide: Calmodulin-regulated spectrin-associated protein 3 (1249 aa).

Disordered regions lie at residues 183 to 205 (KTEQ…APAQ), 328 to 385 (PDGH…SMSH), 430 to 457 (VSSD…GDLP), 473 to 609 (LLPD…RLEE), 632 to 696 (LGKS…HEGL), 714 to 1029 (QRDM…SALA), and 1061 to 1111 (NNLG…TGPR). Thr-184 bears the Phosphothreonine mark. The span at 189 to 205 (AQRASPAAPADGAAPAQ) shows a compositional bias: low complexity. Residue Ser-193 is modified to Phosphoserine. Residues 203 to 312 (PAQPSIRYRK…LVVMLAELFM (110 aa)) form the Calponin-homology (CH) domain. Ser-334, Ser-341, Ser-347, Ser-351, Ser-368, Ser-373, and Ser-382 each carry phosphoserine. Over residues 341–352 (SPPQNNSGSSSP) the composition is skewed to low complexity. The segment covering 364–383 (GGPQSPLRGSTGSLKSSPSM) has biased composition (polar residues). Residues 437–454 (PPRPAPARTPTQPPPEPG) show a composition bias toward pro residues. Phosphoserine is present on residues Ser-547, Ser-554, and Ser-560. Over residues 568 to 579 (AERKKQLVKAEA) the composition is skewed to basic and acidic residues. Over residues 594 to 604 (EALSSEMSELS) the composition is skewed to low complexity. A coiled-coil region spans residues 594–628 (EALSSEMSELSARLEEKRRAIEAQKRRIEAIFAKH). The segment covering 647 to 657 (GEAEAEAEEAD) has biased composition (acidic residues). A Phosphoserine modification is found at Ser-685. A coiled-coil region spans residues 696-729 (LGEYNRAVSKLSAALSSLQRDMQRLTDQQQRLLA). A compositionally biased stretch (pro residues) spans 731–741 (PEAPGSAPPPA). Low complexity predominate over residues 754-779 (AASPSPARRVPATRRSPGPGPSQSPR). Residue Ser-769 is modified to Phosphoserine. Thr-799 is subject to Phosphothreonine. At Ser-814 the chain carries Phosphoserine. Polar residues predominate over residues 814–825 (SPSQVPVQTRSS). Over residues 889–940 (YKDEDKPEDEMAQKRASLLERQQRRAEEARRRKQWQEVEKEQRREEAARLAQ) the composition is skewed to basic and acidic residues. Residues 896–935 (EDEMAQKRASLLERQQRRAEEARRRKQWQEVEKEQRREEA) are a coiled coil. Residues 950–964 (VSAVPMATPAPAARA) show a composition bias toward low complexity. Positions 970–998 (VGPRKGDFTRQEYERRAQLKLMDDLDKVL) are enriched in basic and acidic residues. The residue at position 1074 (Ser-1074) is a Phosphoserine. One can recognise a CKK domain in the interval 1109–1243 (GPRLYKEPSA…QGKKPTTPKK (135 aa)).

It belongs to the CAMSAP1 family. In terms of assembly, interacts with PLEKHA7. Interacts with CAMSAP2. Interacts with KATNA1 and KATNB1; leading to regulate the length of CAMSAP3-decorated microtubule stretches. Interacts with AKAP9; regulating Golgi assembly in epithelial cells. Interacts with MACF1. Interacts with AKNA.

It is found in the cytoplasm. It localises to the cytoskeleton. The protein localises to the cell junction. The protein resides in the adherens junction. Its subcellular location is the cilium axoneme. It is found in the cilium basal body. Functionally, key microtubule-organizing protein that specifically binds the minus-end of non-centrosomal microtubules and regulates their dynamics and organization. Specifically recognizes growing microtubule minus-ends and autonomously decorates and stabilizes microtubule lattice formed by microtubule minus-end polymerization. Acts on free microtubule minus-ends that are not capped by microtubule-nucleating proteins or other factors and protects microtubule minus-ends from depolymerization. In addition, it also reduces the velocity of microtubule polymerization. Required for the biogenesis and the maintenance of zonula adherens by anchoring the minus-end of microtubules to zonula adherens and by recruiting the kinesin KIFC3 to those junctional sites. Required for orienting the apical-to-basal polarity of microtubules in epithelial cells: acts by tethering non-centrosomal microtubules to the apical cortex, leading to their longitudinal orientation. Plays a key role in early embryos, which lack centrosomes: accumulates at the microtubule bridges that connect pairs of cells and enables the formation of a non-centrosomal microtubule-organizing center that directs intracellular transport in the early embryo. Couples non-centrosomal microtubules with actin: interaction with MACF1 at the minus ends of non-centrosomal microtubules, tethers the microtubules to actin filaments, regulating focal adhesion size and cell migration. Plays a key role in the generation of non-centrosomal microtubules by accumulating in the pericentrosomal region and cooperating with KATNA1 to release non-centrosomal microtubules from the centrosome. Through the microtubule cytoskeleton, also regulates the organization of cellular organelles including the Golgi and the early endosomes. Through interaction with AKAP9, involved in translocation of Golgi vesicles in epithelial cells, where microtubules are mainly non-centrosomal. Plays an important role in motile cilia function by facilitatating proper orientation of basal bodies and formation of central microtubule pairs in motile cilia. The chain is Calmodulin-regulated spectrin-associated protein 3 from Homo sapiens (Human).